A 192-amino-acid chain; its full sequence is Ribose 1,5-bisphosphate phosphokinase PhnN (192 aa).

15 to 22 (GPSGAGKD) contributes to the ATP binding site.

This sequence belongs to the ribose 1,5-bisphosphokinase family.

The catalysed reaction is alpha-D-ribose 1,5-bisphosphate + ATP = 5-phospho-alpha-D-ribose 1-diphosphate + ADP. The protein operates within metabolic intermediate biosynthesis; 5-phospho-alpha-D-ribose 1-diphosphate biosynthesis; 5-phospho-alpha-D-ribose 1-diphosphate from D-ribose 5-phosphate (route II): step 3/3. Its function is as follows. Catalyzes the phosphorylation of ribose 1,5-bisphosphate to 5-phospho-D-ribosyl alpha-1-diphosphate (PRPP). The chain is Ribose 1,5-bisphosphate phosphokinase PhnN from Brucella melitensis biotype 2 (strain ATCC 23457).